The chain runs to 538 residues: Bifunctional purine biosynthesis protein PurH (538 aa).

The region spanning Ile8 to Thr158 is the MGS-like domain.

Belongs to the PurH family.

It catalyses the reaction (6R)-10-formyltetrahydrofolate + 5-amino-1-(5-phospho-beta-D-ribosyl)imidazole-4-carboxamide = 5-formamido-1-(5-phospho-D-ribosyl)imidazole-4-carboxamide + (6S)-5,6,7,8-tetrahydrofolate. The enzyme catalyses IMP + H2O = 5-formamido-1-(5-phospho-D-ribosyl)imidazole-4-carboxamide. It participates in purine metabolism; IMP biosynthesis via de novo pathway; 5-formamido-1-(5-phospho-D-ribosyl)imidazole-4-carboxamide from 5-amino-1-(5-phospho-D-ribosyl)imidazole-4-carboxamide (10-formyl THF route): step 1/1. Its pathway is purine metabolism; IMP biosynthesis via de novo pathway; IMP from 5-formamido-1-(5-phospho-D-ribosyl)imidazole-4-carboxamide: step 1/1. The chain is Bifunctional purine biosynthesis protein PurH from Rhizobium leguminosarum bv. trifolii (strain WSM2304).